Reading from the N-terminus, the 1032-residue chain is MTAFSEILQRRDWENPQSVNIHCLKAHSPLASFRDMAHARDGIHAQRQSLNGQWKFKLFDAPEQVDGQFTQADFNDAEWDEIPVPSNWQLQGYDKPIYANIKYPFDVNPPFVPSDNPTGCYRTRVSLSPEDLLNTQRIIFDGVNSAFHLWCNGTWVGYSQDSRLPAEFDLTSHLVAGENTLAVMVMRWCDGSYLEDQDMWWLSGIFRDVTLLSKPQHCIEDVFITPELDACYRDGSLSIVTTIAAPETYQVQVQLFEGTQAVTEPNIARPHNRRIDERGTWNDDVVFQTLHLREPKKWTAETPNLYRLVVSLLDENGTHLESEAYPVGFRKVEISEGQLKLNGKPLLIRGVNRHEHHPELGHVMTEEDMIRDICLMKQYNFNAVRTAHYPNHPRWYELCDQYGLYVCDEANIETHGMQPMSRLSSDPQWAHAYMSRYTQMVLRDKNHPSIIIWSLGNESGHGSNHNAMYAWSKNFDPSRPVQYEGGGSNTTATDIIAPMYARVNTLVADEAVPKWPIKKWISLPNETRPLILCEYAHAMGNSLGSFDEYWAAFREFPRLQGGFIWDWVDQGLSQWDENGQHFWAYGGDFGDEINDRQFCINGLIFPDRTVHPTLQEAKYCQRMITVSLQEQTQKACTLLVTNENLFRTTDNEQLNWSLLENGQVIQTGSQVLSVEADSQTRLEIALNFTPKAQAQYYLNTDICLIEATSWAPAGHVVATEQMALRNHAGLAMPTLRTQPAPKLTENGHAIVVSSLDEKHQWRWDSQSGLLMEWNVDGKAQMLAAPQDNFFRAPLDNDIGISEVDNVDPNAWVCRWEMAGIGQWERHCVQCESETLAHAVVVTTTFAYHFGGDVQAITQWTHTLSNDGEMLLDVDVTLADALPPMPRIGLELQLPLHQADTPITWQGLGPFENYPDRLAAARFGLHTQTLAQMHTPYIFPTDSGLRCGTQWLQVNELAISGDFQFSVSQYAQQQLAEAKHTHDLLAQERIYLRLDHQHMGVGGDDSWSPSVHKEFQLTEKHYRYQLRFSPASR.

2 residues coordinate substrate: N100 and D198. Na(+) is bound at residue D198. Mg(2+) contacts are provided by E413, H415, and E458. Substrate-binding positions include E458 and 534–537 (EYAH). Catalysis depends on E458, which acts as the Proton donor. E534 (nucleophile) is an active-site residue. Residue N594 coordinates Mg(2+). Residues F598 and N601 each coordinate Na(+). Substrate is bound by residues N601 and W1006.

This sequence belongs to the glycosyl hydrolase 2 family. Homotetramer. The cofactor is Mg(2+). Requires Na(+) as cofactor.

The enzyme catalyses Hydrolysis of terminal non-reducing beta-D-galactose residues in beta-D-galactosides.. This is Beta-galactosidase from Vibrio vulnificus (strain CMCP6).